The following is a 75-amino-acid chain: Putative sulfur carrier protein YrkI (75 aa).

Residue Cys-14 is the Cysteine persulfide intermediate of the active site.

Belongs to the sulfur carrier protein TusA family.

The protein is Putative sulfur carrier protein YrkI (yrkI) of Bacillus subtilis (strain 168).